A 533-amino-acid polypeptide reads, in one-letter code: MERLSGKVILVWGFKRALLAILAGAIGVLALPPFGFFAAMFVSFTLLVWLLDGAAAGPDSGFLGRLWPAFTTGWLFGFGYFVAGLWWLGHALLIDADQFAWALPLAILGLPAFLAIFYGVAAVLARLLWSDGMGRIAALAFGFGLLEWLRSFLFTGFPWNAIGYGAMPIPLMMQSAHVIGVLGVTVLAVFVFAAPALLGTRQGRVPGIGLAVLIAAAHFAYGYYALNLPALPPAAGKAAPVVRIVQPAIDQEAKMDTAADRNAIFDKHLSLSVQPPVNGGKRPDIIVWPETAIPFILTDNQDALTRIADQLDDDQILITGAVRVEDMGPGVEPRYYNSVYVIDGRGQIIGASDKTHLVPFGEYVPFENILGYLGIENVVELPGGFSAAASRQLLTLPDGIKLYPLICYEIIFPNEMTPEIRQADAILNVTNDAWFGDTPGPYQHFLQARVRAVEQGLPLIRSANTGVSAYVDAHGRLISGIDFNEQGFVDSTLSGATVSRIDDSVRKTYFWLIIGIVGMIAVISRMGFISRVN.

Transmembrane regions (helical) follow at residues 17-37, 74-94, 105-125, 127-147, 178-198, and 205-225; these read ALLA…FGFF, WLFG…ALLI, LAIL…AVLA, LLWS…GLLE, VIGV…PALL, and VPGI…GYYA. One can recognise a CN hydrolase domain in the interval 245–495; the sequence is VQPAIDQEAK…QGFVDSTLSG (251 aa). The active-site Proton acceptor is the E290. Residue K354 is part of the active site. The active-site Nucleophile is the C407. A helical transmembrane segment spans residues 509-529; that stretch reads YFWLIIGIVGMIAVISRMGFI.

Belongs to the CN hydrolase family. Apolipoprotein N-acyltransferase subfamily.

It localises to the cell inner membrane. The enzyme catalyses N-terminal S-1,2-diacyl-sn-glyceryl-L-cysteinyl-[lipoprotein] + a glycerophospholipid = N-acyl-S-1,2-diacyl-sn-glyceryl-L-cysteinyl-[lipoprotein] + a 2-acyl-sn-glycero-3-phospholipid + H(+). It participates in protein modification; lipoprotein biosynthesis (N-acyl transfer). In terms of biological role, catalyzes the phospholipid dependent N-acylation of the N-terminal cysteine of apolipoprotein, the last step in lipoprotein maturation. This chain is Apolipoprotein N-acyltransferase, found in Rhizobium rhizogenes (strain K84 / ATCC BAA-868) (Agrobacterium radiobacter).